A 61-amino-acid chain; its full sequence is Potassium channel toxin alpha-KTx 6.8 (61 aa).

The signal sequence occupies residues 1–23 (MNAKFILLLLVVTTTILLPDTQG). 4 cysteine pairs are disulfide-bonded: Cys-29-Cys-50, Cys-35-Cys-55, Cys-39-Cys-57, and Cys-45-Cys-60. Position 60 is a cysteine amide (Cys-60).

Belongs to the short scorpion toxin superfamily. Potassium channel inhibitor family. Alpha-KTx 06 subfamily. Expressed by the venom gland.

The protein resides in the secreted. Blocker of voltage-gated potassium channels. This Opistophthalmus carinatus (African yellow leg scorpion) protein is Potassium channel toxin alpha-KTx 6.8.